The sequence spans 401 residues: Tryptophan synthase beta chain (401 aa).

Residue K92 is modified to N6-(pyridoxal phosphate)lysine.

It belongs to the TrpB family. Tetramer of two alpha and two beta chains. The cofactor is pyridoxal 5'-phosphate.

It catalyses the reaction (1S,2R)-1-C-(indol-3-yl)glycerol 3-phosphate + L-serine = D-glyceraldehyde 3-phosphate + L-tryptophan + H2O. Its pathway is amino-acid biosynthesis; L-tryptophan biosynthesis; L-tryptophan from chorismate: step 5/5. Functionally, the beta subunit is responsible for the synthesis of L-tryptophan from indole and L-serine. The chain is Tryptophan synthase beta chain from Ruthia magnifica subsp. Calyptogena magnifica.